The sequence spans 920 residues: Protein translocase subunit SecA (920 aa).

Residues Gln85, Gly103–Thr107, and Asp514 each bind ATP. The Zn(2+) site is built by Cys904, Cys906, Cys915, and His916.

It belongs to the SecA family. In terms of assembly, monomer and homodimer. Part of the essential Sec protein translocation apparatus which comprises SecA, SecYEG and auxiliary proteins SecDF-YajC and YidC. The cofactor is Zn(2+).

The protein localises to the cell inner membrane. The protein resides in the cytoplasm. The enzyme catalyses ATP + H2O + cellular proteinSide 1 = ADP + phosphate + cellular proteinSide 2.. Functionally, part of the Sec protein translocase complex. Interacts with the SecYEG preprotein conducting channel. Has a central role in coupling the hydrolysis of ATP to the transfer of proteins into and across the cell membrane, serving both as a receptor for the preprotein-SecB complex and as an ATP-driven molecular motor driving the stepwise translocation of polypeptide chains across the membrane. This is Protein translocase subunit SecA from Janthinobacterium sp. (strain Marseille) (Minibacterium massiliensis).